The chain runs to 67 residues: MGKIRQGFIKRVARELVNKYPNEFTTDFEHNKKKVQELTNVTSKKIRNRIAGYVTKLVRMKMEGKIL.

This sequence belongs to the eukaryotic ribosomal protein eS17 family. As to quaternary structure, part of the 30S ribosomal subunit.

The protein is Small ribosomal subunit protein eS17 of Pyrococcus furiosus (strain ATCC 43587 / DSM 3638 / JCM 8422 / Vc1).